A 634-amino-acid polypeptide reads, in one-letter code: Pescadillo homolog (634 aa).

The BRCT domain occupies 321-414 (RLRTLFKGLK…QLLPTNKYFM (94 aa)). Disordered regions lie at residues 437–473 (EEKALHDPSLIETHVQSDDDDDDSDAEADNQEEEEIE), 491–561 (EYKK…RKAE), and 603–634 (NIDADAKEAKKTAKREAKKAAAEAAAKALKMA). Ser453 bears the Phosphoserine mark. Composition is skewed to acidic residues over residues 454–473 (DDDDDDSDAEADNQEEEEIE) and 501–527 (VNEDEEDSVDDDDEEDEEEEEEEDVEQ). Coiled coils occupy residues 460–546 (SDAE…KVES) and 596–629 (LLRKKRRNIDADAKEAKKTAKREAKKAAAEAAAK). Basic and acidic residues-rich tracts occupy residues 528–548 (LDDKTKRLLEEKQKMKVESGK) and 603–623 (NIDADAKEAKKTAKREAKKAA). Residues 624-634 (AEAAAKALKMA) show a composition bias toward low complexity.

Belongs to the pescadillo family.

Its subcellular location is the nucleus. The protein localises to the nucleolus. It is found in the nucleoplasm. Functionally, required for maturation of ribosomal RNAs and formation of the large ribosomal subunit. The protein is Pescadillo homolog of Drosophila willistoni (Fruit fly).